The following is a 442-amino-acid chain: Probable folate-biopterin transporter 7 (442 aa).

12 consecutive transmembrane segments (helical) span residues Leu-23–Phe-43, Leu-64–Phe-82, Ile-87–Leu-107, Ile-114–Ala-134, Phe-158–Ile-178, Gln-184–Ile-204, Ile-241–Tyr-261, Ala-270–Ala-290, Lys-302–Val-322, Val-335–Phe-355, Ile-379–Val-399, and Gly-410–Asp-430.

Belongs to the major facilitator superfamily. Folate-biopterin transporter (TC 2.A.71) family.

The protein resides in the membrane. Functionally, could mediate folate transport. The sequence is that of Probable folate-biopterin transporter 7 from Arabidopsis thaliana (Mouse-ear cress).